The chain runs to 572 residues: Formate--tetrahydrofolate ligase (572 aa).

65 to 72 (TPLGEGKT) provides a ligand contact to ATP.

This sequence belongs to the formate--tetrahydrofolate ligase family.

It catalyses the reaction (6S)-5,6,7,8-tetrahydrofolate + formate + ATP = (6R)-10-formyltetrahydrofolate + ADP + phosphate. Its pathway is one-carbon metabolism; tetrahydrofolate interconversion. The polypeptide is Formate--tetrahydrofolate ligase (Chloroflexus aggregans (strain MD-66 / DSM 9485)).